The sequence spans 610 residues: MFDAKAFLADVPHLPGVYRMYDAKNTIIYVGKAKDLKKRLSSYFRSQLASKKTEALVANIHHIETTITHSETEALLLEHNYIKENQPKYNVLLRDDKSYPYILLTKHQHPRITSFRGSKKVAGEYFGPYPNAGAVRETLNLLQKLFPIRQCEDSYYKNRSRPCLQYQIGRCLAPCVESYYSQAEYDNQVNLVRLFLQGKDGQVIEHLVQKMENAAQELDFEAAARFRDQIQSVRAVQEKQFVSNERLDDLDIISIAYQHGIACVHILFVRHGKVLGNRSYFPKVPNNTDLSELADTFVGQFYLQMNQHRTIPNQIIIDQPLSESAALADVLSEQAGHKVSIADKNIRGDKSRYLALAKTNAEAALTLQLKQDTHIRQRYDSLKTLLNLAEIKRMECFDISHTMGNQTVASCVVFDENGPLKSDYRRFNIEGITGGDDYAAMEQALLKRYSRHLEEEKIPDIIFIDGGKGQLNRALETFASLNVSWDKRKPLLIGVAKGVERKAGLETLLISKWDKEIHLPPDSPALHLIQHIRDESHNHAITGHRKKRQKAFTESGLESIAGVGAKRRQALLKYLGGMQGVKAATLEEIQSVPGISKQLAEVIFDTLQHS.

A GIY-YIG domain is found at 13–91; that stretch reads HLPGVYRMYD…IKENQPKYNV (79 aa). A UVR domain is found at 201–236; sequence GQVIEHLVQKMENAAQELDFEAAARFRDQIQSVRAV.

The protein belongs to the UvrC family. In terms of assembly, interacts with UvrB in an incision complex.

The protein localises to the cytoplasm. Its function is as follows. The UvrABC repair system catalyzes the recognition and processing of DNA lesions. UvrC both incises the 5' and 3' sides of the lesion. The N-terminal half is responsible for the 3' incision and the C-terminal half is responsible for the 5' incision. This chain is UvrABC system protein C, found in Actinobacillus pleuropneumoniae serotype 3 (strain JL03).